Consider the following 40-residue polypeptide: Adenylate kinase (40 aa).

An ATP-binding site is contributed by 10–15 (GAGKGT). Positions 30-40 (STGDMFIKAIK) are NMP. Threonine 31 is an AMP binding site.

Belongs to the adenylate kinase family. As to quaternary structure, monomer.

The protein localises to the cytoplasm. It carries out the reaction AMP + ATP = 2 ADP. The protein operates within purine metabolism; AMP biosynthesis via salvage pathway; AMP from ADP: step 1/1. Catalyzes the reversible transfer of the terminal phosphate group between ATP and AMP. Plays an important role in cellular energy homeostasis and in adenine nucleotide metabolism. In Staphylococcus carnosus, this protein is Adenylate kinase (adk).